Consider the following 276-residue polypeptide: Pirin-like protein CC_0481 (276 aa).

The protein belongs to the pirin family.

The chain is Pirin-like protein CC_0481 from Caulobacter vibrioides (strain ATCC 19089 / CIP 103742 / CB 15) (Caulobacter crescentus).